We begin with the raw amino-acid sequence, 120 residues long: Ribosome-binding factor A (120 aa).

The protein belongs to the RbfA family. In terms of assembly, monomer. Binds 30S ribosomal subunits, but not 50S ribosomal subunits or 70S ribosomes.

It localises to the cytoplasm. Its function is as follows. One of several proteins that assist in the late maturation steps of the functional core of the 30S ribosomal subunit. Associates with free 30S ribosomal subunits (but not with 30S subunits that are part of 70S ribosomes or polysomes). Required for efficient processing of 16S rRNA. May interact with the 5'-terminal helix region of 16S rRNA. The polypeptide is Ribosome-binding factor A (Chlamydia felis (strain Fe/C-56) (Chlamydophila felis)).